Consider the following 203-residue polypeptide: ATP-dependent Clp protease proteolytic subunit (203 aa).

The active-site Nucleophile is S107. H132 is a catalytic residue.

It belongs to the peptidase S14 family. In terms of assembly, fourteen ClpP subunits assemble into 2 heptameric rings which stack back to back to give a disk-like structure with a central cavity, resembling the structure of eukaryotic proteasomes.

It is found in the cytoplasm. The enzyme catalyses Hydrolysis of proteins to small peptides in the presence of ATP and magnesium. alpha-casein is the usual test substrate. In the absence of ATP, only oligopeptides shorter than five residues are hydrolyzed (such as succinyl-Leu-Tyr-|-NHMec, and Leu-Tyr-Leu-|-Tyr-Trp, in which cleavage of the -Tyr-|-Leu- and -Tyr-|-Trp bonds also occurs).. Cleaves peptides in various proteins in a process that requires ATP hydrolysis. Has a chymotrypsin-like activity. Plays a major role in the degradation of misfolded proteins. This chain is ATP-dependent Clp protease proteolytic subunit, found in Shewanella halifaxensis (strain HAW-EB4).